The chain runs to 102 residues: Cell division topological specificity factor (102 aa).

This sequence belongs to the MinE family.

Prevents the cell division inhibition by proteins MinC and MinD at internal division sites while permitting inhibition at polar sites. This ensures cell division at the proper site by restricting the formation of a division septum at the midpoint of the long axis of the cell. This Synechococcus sp. (strain CC9605) protein is Cell division topological specificity factor.